Here is a 608-residue protein sequence, read N- to C-terminus: Probable adenylate kinase 5, chloroplastic (608 aa).

Low complexity predominate over residues methionine 1–proline 20. Positions methionine 1 to cysteine 44 are disordered. Residues methionine 1–arginine 75 constitute a chloroplast transit peptide. Alanine 99–threonine 104 contributes to the ATP binding site. The segment at serine 119–valine 148 is NMP. AMP contacts are provided by residues threonine 120, arginine 125, methionine 146–valine 148, glycine 175–arginine 178, and glutamine 182. Residues arginine 209, arginine 213, and isoleucine 222–tyrosine 223 contribute to the ATP site. The interval glycine 212–aspartate 245 is LID. AMP-binding residues include arginine 242 and arginine 253.

It belongs to the adenylate kinase family.

It localises to the plastid. The protein resides in the chloroplast. The catalysed reaction is AMP + ATP = 2 ADP. In terms of biological role, catalyzes the reversible transfer of the terminal phosphate group between ATP and AMP. Plays an important role in cellular energy homeostasis and in adenine nucleotide metabolism. In Oryza sativa subsp. japonica (Rice), this protein is Probable adenylate kinase 5, chloroplastic.